A 298-amino-acid polypeptide reads, in one-letter code: NADH-cytochrome b5 reductase 1 (298 aa).

Residues 14–34 form a helical membrane-spanning segment; the sequence is VILAGAYLIDPSALPFVAAGV. The 104-residue stretch at 56-159 folds into the FAD-binding FR-type domain; that stretch reads KEYRKFKLVD…RGPKGQFSYT (104 aa). FAD is bound by residues 139 to 154 and 165 to 197; these read SELS…GPKG and AIGM…QVNF.

This sequence belongs to the flavoprotein pyridine nucleotide cytochrome reductase family. In terms of assembly, monomer. Component of the 2-(3-amino-3-carboxypropyl)histidine synthase complex composed of DPH1, DPH2, DPH3 and a NADH-dependent reductase, predominantly CBR1. It depends on FAD as a cofactor.

Its subcellular location is the mitochondrion outer membrane. It carries out the reaction 2 Fe(III)-[cytochrome b5] + NADH = 2 Fe(II)-[cytochrome b5] + NAD(+) + H(+). The enzyme catalyses 2 Fe(3+)-[Dph3] + NADH = 2 Fe(2+)-[Dph3] + NAD(+) + H(+). The protein operates within protein modification; peptidyl-diphthamide biosynthesis. NADH-dependent reductase for DPH3 and cytochrome b5. Required for the first step of diphthamide biosynthesis, a post-translational modification of histidine which occurs in elongation factor 2. DPH1 and DPH2 transfer a 3-amino-3-carboxypropyl (ACP) group from S-adenosyl-L-methionine (SAM) to a histidine residue, the reaction is assisted by a reduction system comprising DPH3 and a NADH-dependent reductase, predominantly CBR1. By reducing DPH3, also involved in the formation of the tRNA wobble base modification mcm5s 2U (5-methoxycarbonylmethyl-2-thiouridine), mediated by the elongator complex. The cytochrome b5/NADH cytochrome b5 reductase electron transfer system supports the catalytic activity of several sterol biosynthetic enzymes. This Mortierella alpina (Oleaginous fungus) protein is NADH-cytochrome b5 reductase 1 (CBR1).